The following is a 995-amino-acid chain: MATRGGAGVAMAVWSLLSARAVTAFLLLFLPRFLQAQTFSFPFQQPEKCDNNQYFDISALSCVPCGANQRQDARGTSCVCLPGFQMISNNGGPAIICKKCPENMKGVTEDGWNCISCPSDLTAEGKCHCPIGHILVERDINGTLLSQATCELCDGNENSFMVVNALGDRCVRCEPTFVNTSRSCACSEPNILTGGLCFSSTGNFPLRRISAARYGEVGMSLTSEWFAKYLQSSAAACWVYANLTSCQALGNMCVMNMNSYDFATFDACGLFQFIFENTAGLSTVHSISFWRQNLPWLFYGDQLGLAPQVLSSTSLPTNFSFKGENQNTKLKFVAASYDIRGNFLKWQTLEGGVLQLCPDTETRLNAAYSFGTTYQQNCEIPISKILIDFPTPIFYDVYLEYTDENQHQYILAVPVLNLNLQHNKIFVNQDSNSGKWLLTRRIFLVDAVSGRENDLGTQPRVIRVATQISLSVHLVPNTINGNIYPPLITIAYSDIDIKDANSQSVKVSFSVTYEMDHGEAHVQTDIALGVLGGLAVLASLLKTAGWKRRIGSPMIDLQTVVKFLVYYAGDLANVFFIITVGTGLYWLIFFKAQKSVSVLLPMPIQEERFVTYVGCAFALKALQFLHKLISQITIDVFFIDWERPKGKVLKAVEGEGGVRSATVPVSIWRTYFVANEWNEIQTVRKINSLFQVLTVLFFLEVVGFKNLALMDSSSSLSRNPPSYIAPYSCILRYAVSAALWLAIGIIQVVFFAVFYERFIEDKIRQFVDLCSMSNISVFLLSHKCFGYYIHGRSVHGHADTNMEEMNMNLKREAENLCSQRGLVPNTDGQTFEIAISNQMRQHYDRIHETLIRKNGPARLLSSSASTFEQSIKAYHMMNKFLGSFIDHVHKEMDYFIKDKLLLERILGMEFMEPMEKSIFYNDEGYSFSSVLYYGNEATLLIFDLLFFCVVDLACQNFILASFLTYLQQEIFRYIRNTVGQKNLASKTLVDQRFLI.

The signal sequence occupies residues 1–36 (MATRGGAGVAMAVWSLLSARAVTAFLLLFLPRFLQA). The tract at residues 37 to 280 (QTFSFPFQQP…FQFIFENTAG (244 aa)) is cysteine-rich. At 37 to 519 (QTFSFPFQQP…SVTYEMDHGE (483 aa)) the chain is on the extracellular side. Disulfide bonds link C49–C62, C65–C78, C80–C97, C100–C114, C117–C127, C129–C150, C153–C170, C173–C184, C186–C197, C237–C246, and C253–C268. Residue N141 is glycosylated (N-linked (GlcNAc...) asparagine). N-linked (GlcNAc...) asparagine glycosylation occurs at N179. An N-linked (GlcNAc...) asparagine glycan is attached at N242. N-linked (GlcNAc...) asparagine glycosylation occurs at N318. C357 and C378 form a disulfide bridge. Residues 520 to 548 (AHVQTDIALGVLGGLAVLASLLKTAGWKR) traverse the membrane as a helical segment. The Cytoplasmic portion of the chain corresponds to 549-558 (RIGSPMIDLQ). A helical membrane pass occupies residues 559–590 (TVVKFLVYYAGDLANVFFIITVGTGLYWLIFF). The Extracellular segment spans residues 591 to 603 (KAQKSVSVLLPMP). A helical transmembrane segment spans residues 604-631 (IQEERFVTYVGCAFALKALQFLHKLISQ). Residues 632–670 (ITIDVFFIDWERPKGKVLKAVEGEGGVRSATVPVSIWRT) are Cytoplasmic-facing. Positions 671–679 (YFVANEWNE) form an intramembrane region, helical. A discontinuously helical membrane pass occupies residues 671–701 (YFVANEWNEIQTVRKINSLFQVLTVLFFLEV). An intramembrane segment occupies 680–688 (IQTVRKINS). An intramembrane region (helical) is located at residues 689 to 701 (LFQVLTVLFFLEV). Over 702–731 (VGFKNLALMDSSSSLSRNPPSYIAPYSCIL) the chain is Extracellular. The segment at residues 732–757 (RYAVSAALWLAIGIIQVVFFAVFYER) is an intramembrane region (helical). The discontinuously helical transmembrane segment at 732–771 (RYAVSAALWLAIGIIQVVFFAVFYERFIEDKIRQFVDLCS) threads the bilayer. Residues 758-762 (FIEDK) lie within the membrane without spanning it. Positions 763 to 771 (IRQFVDLCS) form an intramembrane region, helical. Topologically, residues 772–926 (MSNISVFLLS…SIFYNDEGYS (155 aa)) are cytoplasmic. Positions 828 to 917 (GQTFEIAISN…MEFMEPMEKS (90 aa)) form a coiled coil. The helical intramembrane region spans 927–929 (FSS). Residues 927–952 (FSSVLYYGNEATLLIFDLLFFCVVDL) form a discontinuously helical membrane-spanning segment. An intramembrane segment occupies 930 to 936 (VLYYGNE). Residues 937–952 (ATLLIFDLLFFCVVDL) constitute an intramembrane region (helical). The Extracellular segment spans residues 953–957 (ACQNF). The helical transmembrane segment at 958-985 (ILASFLTYLQQEIFRYIRNTVGQKNLAS) threads the bilayer. Residues 986-995 (KTLVDQRFLI) lie on the Cytoplasmic side of the membrane.

As to quaternary structure, homodimer. Part of the tectonic-like complex (also named B9 complex). Interacts with DNAJB9, DNAJC10 and mutated SFTPC. Interacts with SYNE2 during the early establishment of cell polarity. Interacts (via C-terminus) with FLNA. Interacts with TMEM218. Interacts with WNT5A. Interacts with ROR2. In terms of tissue distribution, widely expressed in adult and fetal tissues. Expressed at higher level in spinal cord.

The protein localises to the cell membrane. Its subcellular location is the endoplasmic reticulum membrane. The protein resides in the cell projection. It is found in the cilium. It localises to the cytoplasm. The protein localises to the cytoskeleton. Its subcellular location is the cilium basal body. In terms of biological role, required for ciliary structure and function. Part of the tectonic-like complex which is required for tissue-specific ciliogenesis and may regulate ciliary membrane composition. Involved in centrosome migration to the apical cell surface during early ciliogenesis. Involved in the regulation of cilia length and appropriate number through the control of centrosome duplication. Is a key regulator of stereociliary bundle orientation. Required for epithelial cell branching morphology. Essential for endoplasmic reticulum-associated degradation (ERAD) of surfactant protein C (SFTPC). Involved in the negative regulation of canonical Wnt signaling, and activation of the non-canonical cascade stimulated by WNT5A. In non-canonical Wnt signaling, it may act as ROR2 coreceptor. The chain is Meckelin (TMEM67) from Homo sapiens (Human).